Here is a 447-residue protein sequence, read N- to C-terminus: GTPase Der (447 aa).

EngA-type G domains lie at 3–167 (PVIA…FAQR) and 181–354 (IRLA…AAAM). GTP-binding positions include 9–16 (GRPNVGKS), 56–60 (DTGGF), 119–122 (NKAE), 187–194 (GRPNVGKS), 234–238 (DTAGI), and 299–302 (NKWD). The 85-residue stretch at 355 to 439 (SNLSTPKLTR…PLRIELRSGK (85 aa)) folds into the KH-like domain.

It belongs to the TRAFAC class TrmE-Era-EngA-EngB-Septin-like GTPase superfamily. EngA (Der) GTPase family. Associates with the 50S ribosomal subunit.

Functionally, GTPase that plays an essential role in the late steps of ribosome biogenesis. The chain is GTPase Der from Herminiimonas arsenicoxydans.